The chain runs to 401 residues: MNLDGNQASIREVCDAGLLSGAVTMVWQREKLLQVNEIGYRDIDAGVPMQRDTLFRIASMTKPVTVAAAMSLVDEGKLALRDPITRWAPELCKVAVLDDAAGPLDRTHPARRAILIEDLLTHTSGLAYGFSVSGPISRAYQRLPFGQGPDVWLAALATLPLVHQPGDRVTYSHAIDVLGVIVSRIEDAPLYQIIDERVLGPAGMTDTGFYVSADAQRRAATMYRLDEQDRLRHDVMGPPHVTPPSFCNAGGGLWSTADDYLRFVRMLLGDGTVDGVRVLSPESVRLMRTDRLTDEQKRHSFLGAPFWVGRGFGLNLSVVTDPAKSRPLFGPGGLGTFSWPGAYGTWWQADPSADLILLYLIQHCPDLSVDAAAAVAGNPSLAKLRTAQPKFVRRTYRALGL.

This is an uncharacterized protein from Mycobacterium tuberculosis (strain CDC 1551 / Oshkosh).